The chain runs to 182 residues: Heat shock protein beta-2 (182 aa).

Residues 55-163 (RAGEGARAGA…DTEVNEVYIS (109 aa)) enclose the sHSP domain.

Belongs to the small heat shock protein (HSP20) family. Interacts with DMPK; may enhance its kinase activity.

It is found in the cytoplasm. The protein localises to the nucleus. May regulate the kinase DMPK. This Mus musculus (Mouse) protein is Heat shock protein beta-2 (Hspb2).